A 353-amino-acid polypeptide reads, in one-letter code: MTIALGKFTKDEKDLFDIMDDWLRRDRFVFVGWSGLLLFPCAYFAVGGWFTGTTFVTSWYTHGLASSYLEGCNFLTAAVSTPANSLAHSLLLLWGPEAQGDFTRWCQLGGLWTFVALHGAFGLIGFMLRQFELARSVQLRPYNAIAFSGPIAVFVSVFLIYPLGQSGWFFAPSFGVAAIFRFILFFQGFHNWTLNPFHMMGVAGVLGAALLCAIHGATVENTLFEDGDGANTFRAFNPTQAEETYSMVTANRFWSQIFGVAFSNKRWLHFFMLFVPVTGLWMSALGVVGLALNLRAYDFVSQEIRAAEDPEFETFYTKNILLNEGIRAWMAAQDQPHENLIFPEEVLPRGNAL.

An N-acetylthreonine modification is found at threonine 2. Residue threonine 2 is modified to Phosphothreonine. A helical membrane pass occupies residues 41 to 61; it reads CAYFAVGGWFTGTTFVTSWYT. Position 118 (histidine 118) interacts with chlorophyll a. A helical membrane pass occupies residues 125 to 141; the sequence is GFMLRQFELARSVQLRP. 2 residues coordinate pheophytin a: glutamine 130 and asparagine 143. A helical transmembrane segment spans residues 153–166; the sequence is VFVSVFLIYPLGQS. A chlorophyll a-binding site is contributed by histidine 198. The helical transmembrane segment at 208 to 228 threads the bilayer; sequence AALLCAIHGATVENTLFEDGD. Residues histidine 215 and phenylalanine 262 each contribute to the a plastoquinone site. Histidine 215 contacts Fe cation. Histidine 269 serves as a coordination point for Fe cation. A helical membrane pass occupies residues 279–295; that stretch reads GLWMSALGVVGLALNLR.

The protein belongs to the reaction center PufL/M/PsbA/D family. PSII is composed of 1 copy each of membrane proteins PsbA, PsbB, PsbC, PsbD, PsbE, PsbF, PsbH, PsbI, PsbJ, PsbK, PsbL, PsbM, PsbT, PsbX, PsbY, PsbZ, Psb30/Ycf12, at least 3 peripheral proteins of the oxygen-evolving complex and a large number of cofactors. It forms dimeric complexes. It depends on The D1/D2 heterodimer binds P680, chlorophylls that are the primary electron donor of PSII, and subsequent electron acceptors. It shares a non-heme iron and each subunit binds pheophytin, quinone, additional chlorophylls, carotenoids and lipids. There is also a Cl(-1) ion associated with D1 and D2, which is required for oxygen evolution. The PSII complex binds additional chlorophylls, carotenoids and specific lipids. as a cofactor.

The protein localises to the plastid. It is found in the chloroplast thylakoid membrane. It catalyses the reaction 2 a plastoquinone + 4 hnu + 2 H2O = 2 a plastoquinol + O2. Its function is as follows. Photosystem II (PSII) is a light-driven water:plastoquinone oxidoreductase that uses light energy to abstract electrons from H(2)O, generating O(2) and a proton gradient subsequently used for ATP formation. It consists of a core antenna complex that captures photons, and an electron transfer chain that converts photonic excitation into a charge separation. The D1/D2 (PsbA/PsbD) reaction center heterodimer binds P680, the primary electron donor of PSII as well as several subsequent electron acceptors. D2 is needed for assembly of a stable PSII complex. This chain is Photosystem II D2 protein, found in Jasminum nudiflorum (Winter jasmine).